Reading from the N-terminus, the 424-residue chain is Protein CapL (424 aa).

Belongs to the UDP-glucose/GDP-mannose dehydrogenase family.

The protein operates within capsule biogenesis; capsule polysaccharide biosynthesis. Required for the biosynthesis of type 1 capsular polysaccharide. In Staphylococcus aureus, this protein is Protein CapL (capL).